The following is a 64-amino-acid chain: MKKIDELRNMSVEELQNELLSLRKDQFNLRMKKASGSLDKTHLITMVRKSVAKVKTILTEKAGK.

Belongs to the universal ribosomal protein uL29 family.

The chain is Large ribosomal subunit protein uL29 from Legionella pneumophila (strain Lens).